A 1032-amino-acid chain; its full sequence is Reticulon-3 (1032 aa).

Positions 1–24 are enriched in low complexity; the sequence is MAEPSAATQSHSISSSSFGAEPSA. The interval 1-61 is disordered; that stretch reads MAEPSAATQS…SSSSSQPVSL (61 aa). The residue at position 2 (Ala-2) is an N-acetylalanine. The Cytoplasmic segment spans residues 2–863; it reads AEPSAATQSH…KKTGFVFGTT (862 aa). Residue Ser-30 is modified to Phosphoserine. Low complexity predominate over residues 32 to 61; sequence GACPALGTKSCSSSCADSFVSSSSSQPVSL. Phosphoserine occurs at positions 229, 243, 246, 283, 316, and 453. Residues 545-568 show a composition bias toward basic and acidic residues; it reads CEREEKTSKNFEELVSDSELHQDQ. Residues 545 to 617 are disordered; sequence CEREEKTSKN…NPKLPSTVSP (73 aa). The span at 605–617 shows a compositional bias: polar residues; it reads TTENPKLPSTVSP. Phosphoserine occurs at positions 649 and 650. The span at 696 to 715 shows a compositional bias: basic and acidic residues; that stretch reads NESGGSEIKDIGSKYSEQSK. Residues 696–726 are disordered; sequence NESGGSEIKDIGSKYSEQSKETNGSEPLGVF. Ser-735 bears the Phosphoserine mark. A Reticulon domain is found at 844 to 1032; it reads VHDLIFWRDV…LPGIAKKKAE (189 aa). The segment at residues 864-887 is an intramembrane region (helical); it reads LIMLLSLAAFSVISVVSYLILALL. Residues 888 to 947 are Cytoplasmic-facing; sequence SVTISFRIYKSVIQAVQKSEEGHPFKAYLDVDITLSSEAFHNYMNAAMVHINRALKLIIR. An intramembrane region (helical) is located at residues 948 to 968; sequence LFLVEDLVDSLKLAVFMWLMT. Over 969–972 the chain is Cytoplasmic; it reads YVGA. Positions 973–993 form an intramembrane region, helical; the sequence is VFNGITLLILAELLIFSVPIV. The interval 987–1032 is interaction with FADD; it reads IFSVPIVYEKYKTQIDHYVGIARDQTKSIVEKIQAKLPGIAKKKAE. The Cytoplasmic segment spans residues 994–1032; that stretch reads YEKYKTQIDHYVGIARDQTKSIVEKIQAKLPGIAKKKAE. Residues 1000–1002 are interaction with BACE1; it reads QID.

In terms of assembly, homodimer. Interacts with ATL1. Interacts with RTN4. Isoform 3 interacts with BACE1, BACE2, BCL2 and FADD. Interacts with ATL2. Interacts with TMEM33. Interacts with ZFYVE27 and with KIF5A in a ZFYVE27-dependent manner. Interacts with RIGI. Interacts with TRIM25. As to quaternary structure, (Microbial infection) Interacts with Coxsackievirus A16, enterovirus 71 and poliovirus P2C proteins. (Microbial infection) Interacts with West Nile virus protein NS4A. In terms of tissue distribution, isoform 3 is widely expressed, with highest levels in brain, where it is enriched in neuronal cell bodies from gray matter (at protein level). Three times more abundant in macula than in peripheral retina. Isoform 1 is expressed at high levels in brain and at low levels in skeletal muscle. Isoform 2 is only found in melanoma.

The protein resides in the endoplasmic reticulum membrane. Its subcellular location is the golgi apparatus membrane. May be involved in membrane trafficking in the early secretory pathway. Inhibits BACE1 activity and amyloid precursor protein processing. May induce caspase-8 cascade and apoptosis. May favor BCL2 translocation to the mitochondria upon endoplasmic reticulum stress. Induces the formation of endoplasmic reticulum tubules. Also acts as an inflammation-resolving regulator by interacting with both TRIM25 and RIGI, subsequently impairing RIGI 'Lys-63'-linked polyubiquitination leading to IRF3 and NF-kappa-B inhibition. Functionally, (Microbial infection) Plays a positive role in viral replication and pathogenesis of enteroviruses. This chain is Reticulon-3 (RTN3), found in Homo sapiens (Human).